A 382-amino-acid chain; its full sequence is Anhydro-N-acetylmuramic acid kinase (382 aa).

9-16 provides a ligand contact to ATP; that stretch reads GTSLDGID.

The protein belongs to the anhydro-N-acetylmuramic acid kinase family.

It catalyses the reaction 1,6-anhydro-N-acetyl-beta-muramate + ATP + H2O = N-acetyl-D-muramate 6-phosphate + ADP + H(+). The protein operates within amino-sugar metabolism; 1,6-anhydro-N-acetylmuramate degradation. It functions in the pathway cell wall biogenesis; peptidoglycan recycling. Functionally, catalyzes the specific phosphorylation of 1,6-anhydro-N-acetylmuramic acid (anhMurNAc) with the simultaneous cleavage of the 1,6-anhydro ring, generating MurNAc-6-P. Is required for the utilization of anhMurNAc either imported from the medium or derived from its own cell wall murein, and thus plays a role in cell wall recycling. In Bacillus cereus (strain G9842), this protein is Anhydro-N-acetylmuramic acid kinase.